A 564-amino-acid polypeptide reads, in one-letter code: Protein glycosylation K (564 aa).

At 1 to 15 (MLKKLFFILSKEDKN) the chain is on the cytoplasmic side. The helical transmembrane segment at 16-38 (FLFFLLVFSVFISFIETFAISLV) threads the bilayer. In terms of domain architecture, ABC transmembrane type-1 spans 17–319 (LFFLLVFSVF…IITSYHDLLY (303 aa)). The Extracellular portion of the chain corresponds to 39–76 (MPFITLASDFSYFDRNKYLISLKEYLNIPVFEIIVYFG). The important for stimulation of ATPase activity by lipid-linked oligosaccharides and subsequent translocation of lipid-linked oligosaccharides stretch occupies residues 46 to 67 (SDFSYFDRNKYLISLKEYLNIP). The helical transmembrane segment at 77–98 (VGLIVFYVFRALLNAYYFHLLA) threads the bilayer. Topologically, residues 99 to 149 (RFSKGRYHAIAYKVFSKFLNINYEKFTQKNQSEILKSITGEVYNLSTMISS) are cytoplasmic. A helical transmembrane segment spans residues 150–170 (FLLLMSEIFVVLLLYALMLLI). The Extracellular portion of the chain corresponds to 171–173 (NYK). Residues 174 to 197 (ITLFLSIFMVLNAFILVKILSPII) traverse the membrane as a helical segment. The Cytoplasmic portion of the chain corresponds to 198-254 (KKAGVRREEAMKNFFEILNTNLNNFKFIKLKTKEDGVLSLFKAQSEAFSKANITNES). A helical transmembrane segment spans residues 255-276 (VAAVPRIYLEGIGFCVLVFIVV). The Extracellular portion of the chain corresponds to 277–292 (FLVLKNESDISGILST). A helical transmembrane segment spans residues 293–314 (ISIFVLALYRLMPSANRIITSY). Residues 315–564 (HDLLYYHSSL…LEHGKLKEEK (250 aa)) lie on the Cytoplasmic side of the membrane. One can recognise an ABC transporter domain in the interval 349–564 (LKICNLSFGY…LEHGKLKEEK (216 aa)). Position 382–389 (382–389 (GESGCGKS)) interacts with ATP.

The protein belongs to the ABC transporter superfamily. In terms of assembly, homodimer; domain-swapped. Helices that arise in transmembrane regions 4 and 5 from one subunit cross over and contact the nucleotide-binding domain from the other subunit.

Its subcellular location is the cell inner membrane. It carries out the reaction ATP + H2O + lipopolysaccharideSide 1 = ADP + phosphate + lipopolysaccharideSide 2.. The protein operates within protein modification; protein glycosylation. Its function is as follows. Mediates the ATP-dependent translocation of the undecaprenylpyrophosphate-linked heptasaccharide intermediate across the cell membrane; this is an essential step during the N-linked protein glycosylation pathway. Transport across the membrane is effected via ATP-driven conformation changes. Most likely, only the polar and charged part of the glycolipid enter the substrate-binding cavity, and the lipid tail remains exposed to the membrane lipids during the transmembrane flipping process. The sequence is that of Protein glycosylation K (pglK) from Campylobacter jejuni subsp. jejuni serotype O:2 (strain ATCC 700819 / NCTC 11168).